The chain runs to 85 residues: uncharacterized protein (85 aa).

This is an uncharacterized protein from Escherichia coli (strain K12).